The following is a 238-amino-acid chain: Sugar fermentation stimulation protein homolog (238 aa).

It belongs to the SfsA family.

The chain is Sugar fermentation stimulation protein homolog from Pseudomonas entomophila (strain L48).